Reading from the N-terminus, the 116-residue chain is Iron-sulfur cluster insertion protein ErpA (116 aa).

Positions 44, 108, and 110 each coordinate iron-sulfur cluster.

This sequence belongs to the HesB/IscA family. Homodimer. The cofactor is iron-sulfur cluster.

Its function is as follows. Required for insertion of 4Fe-4S clusters for at least IspG. This is Iron-sulfur cluster insertion protein ErpA from Pseudomonas fluorescens (strain Pf0-1).